We begin with the raw amino-acid sequence, 263 residues long: Interleukin-22 receptor subunit alpha-2 (263 aa).

The signal sequence occupies residues 1 to 21; sequence MMPKHCFLGFLISFFLTGVAG. Fibronectin type-III domains are found at residues 26–68, 100–161, and 162–263; these read HESL…KIMF, GQRQ…TKID, and PPVM…VEIP. N-linked (GlcNAc...) asparagine glycosylation occurs at asparagine 56. Cysteine 110 and cysteine 118 form a disulfide bridge. Residues asparagine 166, asparagine 171, asparagine 192, and asparagine 209 are each glycosylated (N-linked (GlcNAc...) asparagine). Cysteine 238 and cysteine 259 are oxidised to a cystine.

It belongs to the type II cytokine receptor family. In terms of tissue distribution, expressed in placenta, spleen, breast, skin and lung. Also detected in intestinal tract, testis, brain, heart and thymus. No expression found in prostate, bladder, kidney, ovary, muscle, bone marrow, liver and uterus. Isoform 1 is expressed only in placenta. Isoform 2 is expressed in placenta and breast and at lower level in spleen, skin, thymus and stomach.

The protein localises to the secreted. Its function is as follows. Isoform 2 is a receptor for IL22. Binds to IL22, prevents interaction with the functional IL-22R complex and blocks the activity of IL22 (in vitro). May play an important role as an IL22 antagonist in the regulation of inflammatory responses. In terms of biological role, isoform 1 may play a role in establishing and maintaining successful pregnancy. This is Interleukin-22 receptor subunit alpha-2 (IL22RA2) from Homo sapiens (Human).